The primary structure comprises 409 residues: Lysosome-associated membrane glycoprotein 1 (409 aa).

Positions 1-25 are cleaved as a signal peptide; that stretch reads MAAPGGARRRPLLLLLFAGLVHGAS. Positions 26–187 are first lumenal domain; sequence AVFVVKNGNG…SNFSREETRC (162 aa). Over 26 to 374 the chain is Lumenal; the sequence is AVFVVKNGNG…EECQLDENSM (349 aa). 10 N-linked (GlcNAc...) asparagine glycosylation sites follow: N34, N59, N72, N80, N103, N117, N126, N146, N161, and N179. Residues C38 and C76 are joined by a disulfide bond. C151 and C187 are oxidised to a cystine. A disordered region spans residues 180–207; sequence FSREETRCEQDLPTPTTPPQPAPTPAPA. The hinge stretch occupies residues 188 to 219; that stretch reads EQDLPTPTTPPQPAPTPAPASPAVFRYNVSGS. Residues 194-207 show a composition bias toward pro residues; the sequence is PTTPPQPAPTPAPA. N215, N220, N241, N253, N260, N285, N299, and N314 each carry an N-linked (GlcNAc...) asparagine glycan. Residues 220 to 374 are second lumenal domain; that stretch reads NGTCLLASMG…EECQLDENSM (155 aa). Cysteines 223 and 261 form a disulfide. Residues C330 and C367 are joined by a disulfide bond. A helical transmembrane segment spans residues 375 to 398; that stretch reads LIPIAVGGALAGLVLIVLLAYLIG. Topologically, residues 399–409 are cytoplasmic; the sequence is RKRSHAGYQTI.

This sequence belongs to the LAMP family. Interacts with ABCB9; this interaction strongly stabilizes ABCB9 and protects ABCB9 against lysosomal degradation. Interacts with FURIN. Interacts with TMEM175; inhibiting the proton channel activity of TMEM175. O- and N-glycosylated; some of the N-glycans attached to LAMP-1 are polylactosaminoglycans.

It is found in the lysosome membrane. The protein localises to the endosome membrane. Its subcellular location is the late endosome membrane. The protein resides in the cell membrane. It localises to the cytolytic granule membrane. Functionally, lysosomal membrane glycoprotein which plays an important role in lysosome biogenesis, lysosomal pH regulation, autophagy and cholesterol homeostasis. Acts as an important regulator of lysosomal lumen pH regulation by acting as a direct inhibitor of the proton channel TMEM175, facilitating lysosomal acidification for optimal hydrolase activity. Also plays an important role in NK-cells cytotoxicity. Mechanistically, participates in cytotoxic granule movement to the cell surface and perforin trafficking to the lytic granule. In addition, protects NK-cells from degranulation-associated damage induced by their own cytotoxic granule content. Presents carbohydrate ligands to selectins. This is Lysosome-associated membrane glycoprotein 1 (LAMP1) from Bos taurus (Bovine).